A 495-amino-acid chain; its full sequence is Histidine--tRNA ligase (495 aa).

The span at 1–10 shows a compositional bias: polar residues; that stretch reads MTTDSEQPNT. Positions 1–24 are disordered; it reads MTTDSEQPNTDFRPEARAPRGFAD. A compositionally biased stretch (basic and acidic residues) spans 12–24; the sequence is FRPEARAPRGFAD.

It belongs to the class-II aminoacyl-tRNA synthetase family. In terms of assembly, homodimer.

It is found in the cytoplasm. The catalysed reaction is tRNA(His) + L-histidine + ATP = L-histidyl-tRNA(His) + AMP + diphosphate + H(+). This Caulobacter vibrioides (strain ATCC 19089 / CIP 103742 / CB 15) (Caulobacter crescentus) protein is Histidine--tRNA ligase (hisS).